Reading from the N-terminus, the 101-residue chain is Cell division protein FtsB (101 aa).

At 1–3 (MRI) the chain is on the cytoplasmic side. The chain crosses the membrane as a helical span at residues 4–21 (VIYSMLVLLIAIQYPLWL). Residues 22–101 (GKGGWLKVYE…KSSDTQVTKQ (80 aa)) are Periplasmic-facing. A coiled-coil region spans residues 33-53 (ERQVELQEAKNSLLALRNAKL).

This sequence belongs to the FtsB family. As to quaternary structure, part of a complex composed of FtsB, FtsL and FtsQ.

It localises to the cell inner membrane. Essential cell division protein. May link together the upstream cell division proteins, which are predominantly cytoplasmic, with the downstream cell division proteins, which are predominantly periplasmic. This Polynucleobacter necessarius subsp. necessarius (strain STIR1) protein is Cell division protein FtsB.